The chain runs to 254 residues: NAD-dependent protein deacylase 2 (254 aa).

The 254-residue stretch at 1–254 folds into the Deacetylase sirtuin-type domain; it reads MDEHSIMQAV…LPALVRRLGV (254 aa). 24–44 contacts NAD(+); sequence GAGMSADSGLETYRDPETGVW. Substrate-binding residues include Y69 and R72. NAD(+) is bound at residue 105–108; sequence QNID. H123 acts as the Proton acceptor in catalysis. 4 residues coordinate Zn(2+): C131, C134, C157, and C160. Residues 197 to 199 and A241 each bind NAD(+); that span reads GTS.

It belongs to the sirtuin family. Class III subfamily. The cofactor is Zn(2+).

The protein localises to the cytoplasm. It carries out the reaction N(6)-acetyl-L-lysyl-[protein] + NAD(+) + H2O = 2''-O-acetyl-ADP-D-ribose + nicotinamide + L-lysyl-[protein]. It catalyses the reaction N(6)-succinyl-L-lysyl-[protein] + NAD(+) + H2O = 2''-O-succinyl-ADP-D-ribose + nicotinamide + L-lysyl-[protein]. In terms of biological role, NAD-dependent lysine deacetylase and desuccinylase that specifically removes acetyl and succinyl groups on target proteins. Modulates the activities of several proteins which are inactive in their acylated form. This is NAD-dependent protein deacylase 2 from Corynebacterium efficiens (strain DSM 44549 / YS-314 / AJ 12310 / JCM 11189 / NBRC 100395).